The sequence spans 273 residues: Cysteine protease S273R (273 aa).

Catalysis depends on residues histidine 168 and asparagine 187. Glutamine 226 is a binding site for substrate. The active-site Nucleophile is cysteine 232.

This sequence belongs to the peptidase C63 family.

Its subcellular location is the host cytoplasm. The protein localises to the virion. In terms of biological role, cysteine protease that plays several role during infection including processing of the structural polyprotein or inhibition of the host immune response. Catalyzes the maturation of the pp220 and pp62 polyprotein precursors into core-shell proteins. Plays a role in the disruption of host pyroptosis via specific cleavage of gasdermin D/GSDMD. In addition, strongly decreases the host cGAS-STING signaling by targeting IKBKE via its enzymatic activity. Also impairs host FOXJ1-mediated antiviral effect via degradation of FOXJ1. The polypeptide is Cysteine protease S273R (African swine fever virus (isolate Tick/Malawi/Lil 20-1/1983) (ASFV)).